The primary structure comprises 281 residues: Transformer-2 protein homolog alpha (281 aa).

Positions 1–116 (MSDVEENNFE…TGSRANPDPN (116 aa)) are disordered. Position 2 is an N-acetylserine (Ser-2). Phosphoserine is present on residues Ser-2 and Ser-14. Position 24 is a phosphothreonine (Thr-24). The segment covering 51 to 82 (RSRSKSRSRSRRHSHRRYTRSRSHSHRRRSRS) has biased composition (basic residues). Phosphoserine is present on residues Ser-80, Ser-82, and Ser-84. At Thr-86 the chain carries Phosphothreonine. Positions 90-108 (RRRRSRSHSPMSNRRRHTG) are enriched in basic residues. Phosphoserine occurs at positions 94 and 96. The region spanning 117–195 (TCLGVFGLSL…RRIRVDYSIT (79 aa)) is the RRM domain. Lys-196 is covalently cross-linked (Glycyl lysine isopeptide (Lys-Gly) (interchain with G-Cter in SUMO2)). The linker stretch occupies residues 196–223 (KRAHTPTPGIYMGRPTHSGGGGGGGGGG). Residues 199 to 281 (HTPTPGIYMG…RSRSYSPRRY (83 aa)) are disordered. 2 positions are modified to phosphothreonine: Thr-200 and Thr-202. The segment covering 213–231 (SGGGGGGGGGGGGGGGGGG) has biased composition (gly residues). An Omega-N-methylarginine modification is found at Arg-233. Positions 233–257 (RRRDSYYDRGYDRGYDRYEDYDYRR) are enriched in basic and acidic residues. Ser-237 is modified (phosphoserine). Over residues 267-281 (YRSRSRSRSYSPRRY) the composition is skewed to basic residues.

Belongs to the splicing factor SR family. As to quaternary structure, binds to A3 enhancer proteins SRp75, SRp55, SRp40 and SRp30. Interacts with ILDR1 (via C-terminus) and ILDR2. Post-translationally, phosphorylated in the RS domains. In terms of tissue distribution, expressed in inner ear.

The protein resides in the nucleus. Sequence-specific RNA-binding protein which participates in the control of pre-mRNA splicing. In Mus musculus (Mouse), this protein is Transformer-2 protein homolog alpha.